A 446-amino-acid chain; its full sequence is Phosphoglucosamine mutase (446 aa).

Catalysis depends on serine 102, which acts as the Phosphoserine intermediate. 4 residues coordinate Mg(2+): serine 102, aspartate 239, aspartate 241, and aspartate 243. Serine 102 is modified (phosphoserine).

It belongs to the phosphohexose mutase family. Mg(2+) is required as a cofactor. Post-translationally, activated by phosphorylation.

It catalyses the reaction alpha-D-glucosamine 1-phosphate = D-glucosamine 6-phosphate. Functionally, catalyzes the conversion of glucosamine-6-phosphate to glucosamine-1-phosphate. The protein is Phosphoglucosamine mutase of Solibacter usitatus (strain Ellin6076).